Here is a 465-residue protein sequence, read N- to C-terminus: Glutathione reductase (465 aa).

FAD-binding residues include S16 and G17. Glutathione is bound at residue S16. Residue R23 coordinates glutathione. Residues E42, T49, C50, and K58 each coordinate FAD. A disulfide bridge connects residues C50 and C55. Y108 is a glutathione binding site. Position 124 (G124) interacts with FAD. Residues A187, I190, E193, R210, R216, and G276 each coordinate NADP(+). Position 318 (D318) interacts with FAD. L324 serves as a coordination point for NADP(+). An FAD-binding site is contributed by T326. Glutathione is bound at residue R334. V357 serves as a coordination point for NADP(+). H454 contributes to the FAD binding site. The Proton acceptor role is filled by H454.

The protein belongs to the class-I pyridine nucleotide-disulfide oxidoreductase family. Requires FAD as cofactor.

The protein localises to the cytoplasm. It catalyses the reaction 2 glutathione + NADP(+) = glutathione disulfide + NADPH + H(+). Its function is as follows. Catalyzes the reduction of glutathione disulfide (GSSG) to reduced glutathione (GSH). Constitutes the major mechanism to maintain a high GSH:GSSG ratio in the cytosol. The amount of GSH may affect the determination of cell fate. This Dictyostelium discoideum (Social amoeba) protein is Glutathione reductase (gsr).